We begin with the raw amino-acid sequence, 125 residues long: SNRPMPLNTYQFRNMIQCTVPSRSWWDFADYGCYCGCGSGTPVDDLDRCCQVHCNCYRQAGEISGCRPKFKTYTYECSGGTLTCKGDNNACAASSCDCDRLAAICFAGAPYNDNNYNIDLKARCN.

S1 is a signal peptide. Positions 2–7 (NRPMPL) are excised as a propeptide. 8 disulfide bridges follow: C18/C77, C33/C124, C35/C50, C37/C54, C49/C105, C56/C98, C66/C91, and C84/C96. F28 is a binding site for N-acetyl-beta-D-glucosamine. D30 contributes to the Zn(2+) binding site. Y34 and G36 together coordinate Ca(2+). H53 and K69 together coordinate N-acetyl-beta-D-glucosamine. H53 is an active-site residue. E76 is a binding site for Zn(2+). The active site involves D99. N117 serves as a coordination point for Zn(2+).

In terms of assembly, heterodimer formed between isoform 5 and isoform 6 in presence of zinc ion and monomer in absence of zinc ion. Ca(2+) is required as a cofactor. As to expression, expressed by the venom gland.

Its subcellular location is the secreted. It catalyses the reaction a 1,2-diacyl-sn-glycero-3-phosphocholine + H2O = a 1-acyl-sn-glycero-3-phosphocholine + a fatty acid + H(+). PLA2 catalyzes the calcium-dependent hydrolysis of the 2-acyl groups in 3-sn-phosphoglycerides. The protein is Acidic phospholipase A2 5 of Naja sagittifera (Andaman cobra).